The sequence spans 412 residues: Diphosphomevalonate decarboxylase MVD1, peroxisomal (412 aa).

Residue 23–26 participates in (R)-5-diphosphomevalonate binding; that stretch reads YWGK. The short motif at 40–48 is the Peroxisomal targeting signal PTS2 element; the sequence is SVTLDPDHL. (R)-5-diphosphomevalonate is bound by residues arginine 78, 161 to 166, and threonine 217; that span reads SGSACR.

Belongs to the diphosphomevalonate decarboxylase family. Homodimer.

It is found in the peroxisome. It catalyses the reaction (R)-5-diphosphomevalonate + ATP = isopentenyl diphosphate + ADP + phosphate + CO2. The protein operates within isoprenoid biosynthesis; isopentenyl diphosphate biosynthesis via mevalonate pathway; isopentenyl diphosphate from (R)-mevalonate: step 3/3. Performs the first committed step in the biosynthesis of isoprene-containing compounds such as sterols and terpenoids. Is specific for (R)-5-diphosphomevalonate (MVAPP). The catalytic efficiency with (R)-5-phosphomevalonate (MVAP) as substrate is 10000-fold lower than for MVAPP. Can complement a yeast mutant defective in MVD activity. The protein is Diphosphomevalonate decarboxylase MVD1, peroxisomal of Arabidopsis thaliana (Mouse-ear cress).